We begin with the raw amino-acid sequence, 426 residues long: MKQLRLEPVVQVRGEINIPGSKSISNRALLLATLAKGTTTLTNLLDSDDIRHMLASLKQLGVEYRLSQNNTVCELTGLGGVISSDTAQTLFLGNAGTAMRPLCAALTLGRGEFTLTGEPRMEERPIGDLVDALKQLGANIVYLKNDGFPPLTINATGLNGGDVEIAGDLSSQFLTALLMVAPLAKGSVNIHVKGELVSKPYIDITLALMAQFGVQVINHDYARFEIPAGQQYVSPGKVLVEGDASSASYFLAAGAIKGGEVKVTGVGRLSIQGDVKFADVLEKMGADIEWGDDYIIARGAPLTAVDLDMNHIPDAAMTIATAALFAKGTTTIRNIYNWRIKETDRLAAMATELRKVGALVEEGHDYIQITPPVVLNTAEIDTYNDHRMAMCFSMMAFADCGITINDPDCTSKTFPDYFAQFASLKA.

Positions 22, 23, and 27 each coordinate 3-phosphoshikimate. Position 22 (Lys-22) interacts with phosphoenolpyruvate. The phosphoenolpyruvate site is built by Gly-96 and Arg-124. 3-phosphoshikimate-binding residues include Ser-170, Ser-171, Gln-172, Ser-198, Asp-314, Asn-337, and Lys-341. A phosphoenolpyruvate-binding site is contributed by Gln-172. Asp-314 serves as the catalytic Proton acceptor. Arg-345, Arg-387, and Lys-412 together coordinate phosphoenolpyruvate.

Belongs to the EPSP synthase family. As to quaternary structure, monomer.

It is found in the cytoplasm. It catalyses the reaction 3-phosphoshikimate + phosphoenolpyruvate = 5-O-(1-carboxyvinyl)-3-phosphoshikimate + phosphate. The protein operates within metabolic intermediate biosynthesis; chorismate biosynthesis; chorismate from D-erythrose 4-phosphate and phosphoenolpyruvate: step 6/7. Functionally, catalyzes the transfer of the enolpyruvyl moiety of phosphoenolpyruvate (PEP) to the 5-hydroxyl of shikimate-3-phosphate (S3P) to produce enolpyruvyl shikimate-3-phosphate and inorganic phosphate. This is 3-phosphoshikimate 1-carboxyvinyltransferase from Shewanella sp. (strain ANA-3).